A 292-amino-acid chain; its full sequence is 11-beta-hydroxysteroid dehydrogenase 1 (292 aa).

Residues 2-7 (AFMKKY) are Cytoplasmic-facing. Residues 8–24 (LLPLLGLFLAYYYYSAN) form a helical; Signal-anchor for type II membrane protein membrane-spanning segment. Topologically, residues 25–292 (EEFRPEMLQG…KFDISKLVNN (268 aa)) are lumenal. NADP(+) is bound by residues 41 to 67 (GASK…TARS), 92 to 93 (TM), and 119 to 121 (NHI). 2 N-linked (GlcNAc...) asparagine glycosylation sites follow: Asn123 and Asn162. Ser170 is a substrate binding site. Tyr183 acts as the Proton acceptor in catalysis. 183–187 (YSASK) is an NADP(+) binding site. An N-linked (GlcNAc...) asparagine glycan is attached at Asn207. 218–222 (IDTDT) is a binding site for NADP(+).

It belongs to the short-chain dehydrogenases/reductases (SDR) family. Homodimer. Post-translationally, glycosylated. Expressed in the eye.

It localises to the endoplasmic reticulum membrane. It is found in the microsome membrane. The enzyme catalyses an 11beta-hydroxysteroid + NADP(+) = an 11-oxosteroid + NADPH + H(+). The catalysed reaction is corticosterone + NADP(+) = 11-dehydrocorticosterone + NADPH + H(+). It carries out the reaction cortisone + NADPH + H(+) = cortisol + NADP(+). It catalyses the reaction a 7beta-hydroxysteroid + NADP(+) = a 7-oxosteroid + NADPH + H(+). The enzyme catalyses 7-oxocholesterol + NADPH + H(+) = 7beta-hydroxycholesterol + NADP(+). The catalysed reaction is chenodeoxycholate + NADP(+) = 7-oxolithocholate + NADPH + H(+). It carries out the reaction 7-oxolithocholate + NADPH + H(+) = ursodeoxycholate + NADP(+). It catalyses the reaction glycochenodeoxycholate + NADP(+) = 7-oxoglycolithocholate + NADPH + H(+). The enzyme catalyses taurochenodeoxycholate + NADP(+) = 7-oxotaurolithocholate + NADPH + H(+). The catalysed reaction is tauroursodeoxycholate + NADP(+) = 7-oxotaurolithocholate + NADPH + H(+). It carries out the reaction glycoursodeoxycholate + NADP(+) = 7-oxoglycolithocholate + NADPH + H(+). It catalyses the reaction 7-oxopregnenolone + NADPH + H(+) = 7beta-hydroxypregnenolone + NADP(+). The enzyme catalyses 3beta,7alpha-dihydroxyandrost-5-en-17-one + NADP(+) = 3beta-hydroxy-5-androstene-7,17-dione + NADPH + H(+). The catalysed reaction is 3beta-hydroxy-5-androstene-7,17-dione + NADPH + H(+) = 3beta,7beta-dihydroxyandrost-5-en-17-one + NADP(+). It carries out the reaction 3beta-hydroxy-5alpha-androstane-7,17-dione + NADPH + H(+) = 3beta,7beta-dihydroxy-5alpha-androstan-17-one + NADP(+). Its pathway is steroid metabolism. In terms of biological role, controls the reversible conversion of biologically active glucocorticoids such as cortisone to cortisol, and 11-dehydrocorticosterone to corticosterone in the presence of NADP(H). Participates in the corticosteroid receptor-mediated anti-inflammatory response, as well as metabolic and homeostatic processes. Plays a role in the secretion of aqueous humor in the eye, maintaining a normotensive, intraocular environment. Bidirectional in vitro, predominantly functions as a reductase in vivo, thereby increasing the concentration of active glucocorticoids. It has broad substrate specificity, besides glucocorticoids, it accepts other steroid and sterol substrates. It has broad substrate specificity, besides glucocorticoids, it accepts other steroid and sterol substrates. Interconverts 7-oxo- and 7-hydroxy-neurosteroids such as 7-oxopregnenolone and 7beta-hydroxypregnenolone, 7-oxodehydroepiandrosterone (3beta-hydroxy-5-androstene-7,17-dione) and 7beta-hydroxydehydroepiandrosterone (3beta,7beta-dihydroxyandrost-5-en-17-one), among others. Catalyzes the stereo-specific conversion of the major dietary oxysterol, 7-ketocholesterol (7-oxocholesterol), into the more polar 7-beta-hydroxycholesterol metabolite. 7-oxocholesterol is one of the most important oxysterols, it participates in several events such as induction of apoptosis, accumulation in atherosclerotic lesions, lipid peroxidation, and induction of foam cell formation. Mediates the 7-oxo reduction of 7-oxolithocholate mainly to chenodeoxycholate, and to a lesser extent to ursodeoxycholate, both in its free form and when conjugated to glycine or taurine, providing a link between glucocorticoid activation and bile acid metabolism. Catalyzes the synthesis of 7-beta-25-dihydroxycholesterol from 7-oxo-25-hydroxycholesterol in vitro, which acts as a ligand for the G-protein-coupled receptor (GPCR) Epstein-Barr virus-induced gene 2 (EBI2) and may thereby regulate immune cell migration. The polypeptide is 11-beta-hydroxysteroid dehydrogenase 1 (Oryctolagus cuniculus (Rabbit)).